A 108-amino-acid chain; its full sequence is Small cysteine and glycine repeat-containing protein 8 (108 aa).

The interval 4 to 84 (CGCGGCGGGC…RRTCSSCGCG (81 aa)) is 12 X 2 AA repeats of CG.

This sequence belongs to the KRTAP type 28 family.

Its function is as follows. In the hair cortex, hair keratin intermediate filaments are embedded in an interfilamentous matrix, consisting of hair keratin-associated proteins (KRTAP), which are essential for the formation of a rigid and resistant hair shaft through their extensive disulfide bond cross-linking with abundant cysteine residues of hair keratins. The matrix proteins include the high-sulfur and high-glycine-tyrosine keratins. In Homo sapiens (Human), this protein is Small cysteine and glycine repeat-containing protein 8.